Here is a 106-residue protein sequence, read N- to C-terminus: ATP-dependent Clp protease adapter protein ClpS (106 aa).

Positions 1-10 are enriched in basic and acidic residues; that stretch reads MSQKTVHDQD. A disordered region spans residues 1–22; that stretch reads MSQKTVHDQDNALLLETGNTKV.

Belongs to the ClpS family. In terms of assembly, binds to the N-terminal domain of the chaperone ClpA.

Its function is as follows. Involved in the modulation of the specificity of the ClpAP-mediated ATP-dependent protein degradation. This chain is ATP-dependent Clp protease adapter protein ClpS, found in Xylella fastidiosa (strain 9a5c).